Consider the following 702-residue polypeptide: Elongation factor G 2 (702 aa).

A tr-type G domain is found at 8-290 (ERYRNIGISA…AVIDYLPSPV (283 aa)). GTP is bound by residues 17–24 (AHIDAGKT), 88–92 (DTPGH), and 142–145 (NKMD).

The protein belongs to the TRAFAC class translation factor GTPase superfamily. Classic translation factor GTPase family. EF-G/EF-2 subfamily.

The protein resides in the cytoplasm. In terms of biological role, catalyzes the GTP-dependent ribosomal translocation step during translation elongation. During this step, the ribosome changes from the pre-translocational (PRE) to the post-translocational (POST) state as the newly formed A-site-bound peptidyl-tRNA and P-site-bound deacylated tRNA move to the P and E sites, respectively. Catalyzes the coordinated movement of the two tRNA molecules, the mRNA and conformational changes in the ribosome. The chain is Elongation factor G 2 from Cupriavidus metallidurans (strain ATCC 43123 / DSM 2839 / NBRC 102507 / CH34) (Ralstonia metallidurans).